Reading from the N-terminus, the 59-residue chain is Large ribosomal subunit protein uL30 (59 aa).

This sequence belongs to the universal ribosomal protein uL30 family. In terms of assembly, part of the 50S ribosomal subunit.

The protein is Large ribosomal subunit protein uL30 of Rhodococcus jostii (strain RHA1).